A 252-amino-acid chain; its full sequence is Flagellar brake protein YcgR (252 aa).

Residues 123 to 238 (QRREFYRVPT…TLATVQKYIT (116 aa)) form the PilZ domain.

This sequence belongs to the YcgR family. In terms of assembly, monomer. Interacts with the flagellar basal bodies.

The protein resides in the bacterial flagellum basal body. Its function is as follows. Acts as a flagellar brake, regulating swimming and swarming in a bis-(3'-5') cyclic diguanylic acid (c-di-GMP)-dependent manner. Binds 1 c-di-GMP dimer per subunit. Increasing levels of c-di-GMP lead to decreased motility. This chain is Flagellar brake protein YcgR, found in Janthinobacterium sp. (strain Marseille) (Minibacterium massiliensis).